We begin with the raw amino-acid sequence, 861 residues long: E3 ubiquitin-protein ligase HECTD3 (861 aa).

Ala2 bears the N-acetylalanine mark. The residue at position 12 (Ser12) is a Phosphoserine. The 179-residue stretch at 219 to 397 folds into the DOC domain; it reads DEDLIHFLYD…TSLVRYPRLE (179 aa). One can recognise an HECT domain in the interval 512–857; it reads YEKPLDYRWP…NCVAIDTDMS (346 aa). Cys823 serves as the catalytic Glycyl thioester intermediate.

Interacts with TRIOBP. Interacts with STX8.

It localises to the cytoplasm. Its subcellular location is the perinuclear region. The enzyme catalyses S-ubiquitinyl-[E2 ubiquitin-conjugating enzyme]-L-cysteine + [acceptor protein]-L-lysine = [E2 ubiquitin-conjugating enzyme]-L-cysteine + N(6)-ubiquitinyl-[acceptor protein]-L-lysine.. The protein operates within protein modification; protein ubiquitination. E3 ubiquitin ligases accepts ubiquitin from an E2 ubiquitin-conjugating enzyme in the form of a thioester and then directly transfers the ubiquitin to targeted substrates. Mediates ubiquitination of TRIOBP and its subsequent proteasomal degradation, thus facilitating cell cycle progression by regulating the turn-over of TRIOBP. Mediates also ubiquitination of STX8. This chain is E3 ubiquitin-protein ligase HECTD3 (HECTD3), found in Homo sapiens (Human).